The primary structure comprises 119 residues: Putative arsenical resistance operon repressor ArsR2 (119 aa).

The 96-residue stretch at 24-119 (VDSDAMATDL…TLDDLRGNHE (96 aa)) folds into the HTH arsR-type domain. A DNA-binding region (H-T-H motif) is located at residues 60–83 (VCDLEATVGVSQSAVSQALSRLYT).

Its function is as follows. Transcriptional repressor for the arsR2M operon. The chain is Putative arsenical resistance operon repressor ArsR2 (arsR2) from Halobacterium salinarum (strain ATCC 700922 / JCM 11081 / NRC-1) (Halobacterium halobium).